The chain runs to 211 residues: FMN-dependent NADH:quinone oxidoreductase 3 (211 aa).

102–105 (MWNF) is a binding site for FMN.

Belongs to the azoreductase type 1 family. Homodimer. Requires FMN as cofactor.

It catalyses the reaction 2 a quinone + NADH + H(+) = 2 a 1,4-benzosemiquinone + NAD(+). It carries out the reaction N,N-dimethyl-1,4-phenylenediamine + anthranilate + 2 NAD(+) = 2-(4-dimethylaminophenyl)diazenylbenzoate + 2 NADH + 2 H(+). Functionally, quinone reductase that provides resistance to thiol-specific stress caused by electrophilic quinones. Also exhibits azoreductase activity. Catalyzes the reductive cleavage of the azo bond in aromatic azo compounds to the corresponding amines. This chain is FMN-dependent NADH:quinone oxidoreductase 3, found in Bacillus cereus (strain ATCC 10987 / NRS 248).